The chain runs to 614 residues: Bifunctional enzyme CysN/CysC (614 aa).

The sulfate adenylyltransferase stretch occupies residues 1-441; it reads MTTLLRLATA…SLVTAQDRPP (441 aa). The tr-type G domain maps to 2-217; that stretch reads TTLLRLATAG…DVYIAGDRNM (216 aa). A G1 region spans residues 11–18; the sequence is GSVDDGKS. 11–18 serves as a coordination point for GTP; it reads GSVDDGKS. The segment at 67 to 71 is G2; sequence GITID. The tract at residues 88–91 is G3; that stretch reads DTPG. Residues 88-92 and 143-146 each bind GTP; these read DTPGH and NKMD. Residues 143–146 are G4; the sequence is NKMD. Residues 180–182 form a G5 region; sequence SAL. The interval 442–614 is adenylyl-sulfate kinase; the sequence is RGKTVWFTGL…EVIDLLESSS (173 aa). 450–457 contributes to the ATP binding site; sequence GLSGSGKS. Residue Ser-524 is the Phosphoserine intermediate of the active site. The segment at 578–597 is disordered; sequence GIDSPYQRPKNPDLRLTPDR. A compositionally biased stretch (basic and acidic residues) spans 587–597; that stretch reads KNPDLRLTPDR.

It in the C-terminal section; belongs to the APS kinase family. This sequence in the N-terminal section; belongs to the TRAFAC class translation factor GTPase superfamily. Classic translation factor GTPase family. CysN/NodQ subfamily. In terms of assembly, heterodimer composed of CysD, the smaller subunit, and CysNC.

The enzyme catalyses sulfate + ATP + H(+) = adenosine 5'-phosphosulfate + diphosphate. It carries out the reaction adenosine 5'-phosphosulfate + ATP = 3'-phosphoadenylyl sulfate + ADP + H(+). Its pathway is sulfur metabolism; hydrogen sulfide biosynthesis; sulfite from sulfate: step 1/3. It participates in sulfur metabolism; hydrogen sulfide biosynthesis; sulfite from sulfate: step 2/3. In terms of biological role, with CysD forms the ATP sulfurylase (ATPS) that catalyzes the adenylation of sulfate producing adenosine 5'-phosphosulfate (APS) and diphosphate, the first enzymatic step in sulfur assimilation pathway. APS synthesis involves the formation of a high-energy phosphoric-sulfuric acid anhydride bond driven by GTP hydrolysis by CysN coupled to ATP hydrolysis by CysD. APS kinase catalyzes the synthesis of activated sulfate. The protein is Bifunctional enzyme CysN/CysC (cysNC) of Mycobacterium tuberculosis (strain CDC 1551 / Oshkosh).